Consider the following 97-residue polypeptide: Large ribosomal subunit protein uL23 (97 aa).

It belongs to the universal ribosomal protein uL23 family. In terms of assembly, part of the 50S ribosomal subunit. Contacts protein L29, and trigger factor when it is bound to the ribosome.

One of the early assembly proteins it binds 23S rRNA. One of the proteins that surrounds the polypeptide exit tunnel on the outside of the ribosome. Forms the main docking site for trigger factor binding to the ribosome. This chain is Large ribosomal subunit protein uL23, found in Thermoanaerobacter pseudethanolicus (strain ATCC 33223 / 39E) (Clostridium thermohydrosulfuricum).